Consider the following 692-residue polypeptide: DNA topoisomerase 4 subunit B (692 aa).

Residues Y53, N93, D120, G162–I168, and K393 contribute to the ATP site. The Toprim domain occupies A473–P587. E479, D552, and D554 together coordinate Mg(2+).

This sequence belongs to the type II topoisomerase family. ParE type 1 subfamily. As to quaternary structure, heterotetramer composed of ParC and ParE. The cofactor is Mg(2+). Mn(2+) serves as cofactor. It depends on Ca(2+) as a cofactor.

It catalyses the reaction ATP-dependent breakage, passage and rejoining of double-stranded DNA.. Functionally, topoisomerase IV is essential for chromosome segregation. It relaxes supercoiled DNA. Performs the decatenation events required during the replication of a circular DNA molecule. This Bartonella bacilliformis (strain ATCC 35685 / KC583 / Herrer 020/F12,63) protein is DNA topoisomerase 4 subunit B.